Reading from the N-terminus, the 267-residue chain is 3-methyl-2-oxobutanoate hydroxymethyltransferase (267 aa).

The Mg(2+) site is built by aspartate 46 and aspartate 85. Residues 46-47 (DS), aspartate 85, and lysine 115 each bind 3-methyl-2-oxobutanoate. Glutamate 117 contributes to the Mg(2+) binding site. Glutamate 184 (proton acceptor) is an active-site residue.

The protein belongs to the PanB family. Homodecamer; pentamer of dimers. The cofactor is Mg(2+).

It is found in the cytoplasm. It catalyses the reaction 3-methyl-2-oxobutanoate + (6R)-5,10-methylene-5,6,7,8-tetrahydrofolate + H2O = 2-dehydropantoate + (6S)-5,6,7,8-tetrahydrofolate. Its pathway is cofactor biosynthesis; (R)-pantothenate biosynthesis; (R)-pantoate from 3-methyl-2-oxobutanoate: step 1/2. In terms of biological role, catalyzes the reversible reaction in which hydroxymethyl group from 5,10-methylenetetrahydrofolate is transferred onto alpha-ketoisovalerate to form ketopantoate. The polypeptide is 3-methyl-2-oxobutanoate hydroxymethyltransferase (Syntrophotalea carbinolica (strain DSM 2380 / NBRC 103641 / GraBd1) (Pelobacter carbinolicus)).